Consider the following 198-residue polypeptide: Dephospho-CoA kinase (198 aa).

The DPCK domain occupies 3–198 (LIGLTGGIAS…VDALWAGLRG (196 aa)). 11-16 (ASGKST) contacts ATP.

This sequence belongs to the CoaE family.

It localises to the cytoplasm. It catalyses the reaction 3'-dephospho-CoA + ATP = ADP + CoA + H(+). It participates in cofactor biosynthesis; coenzyme A biosynthesis; CoA from (R)-pantothenate: step 5/5. In terms of biological role, catalyzes the phosphorylation of the 3'-hydroxyl group of dephosphocoenzyme A to form coenzyme A. The polypeptide is Dephospho-CoA kinase (Leifsonia xyli subsp. xyli (strain CTCB07)).